A 540-amino-acid polypeptide reads, in one-letter code: CWF19-like protein 1 (540 aa).

A disordered region spans residues 265-326 (ENPYRKSDKD…AKQPRKHPQP (62 aa)). Residues 267-277 (PYRKSDKDTPK) are compositionally biased toward basic and acidic residues.

This sequence belongs to the CWF19 family.

In Xenopus laevis (African clawed frog), this protein is CWF19-like protein 1 (cwf19l1).